The following is a 153-amino-acid chain: Putative nuclear shuttle protein (153 aa).

This sequence belongs to the nanoviridae nuclear shuttle protein family.

It localises to the host nucleus. It is found in the host cytoplasm. In terms of biological role, putative nuclear shuttle protein. The chain is Putative nuclear shuttle protein (DNA-N) from Faba bean necrotic yellows virus (isolate Syrian SV292-88) (FBNYV).